The sequence spans 118 residues: uncharacterized protein (118 aa).

The disordered stretch occupies residues 1–49; sequence MDYVGGSLKLKNVKKKPLKKKKKDSKKLAEKVQEHSSRDKSPLEENGVS. Over residues 11–25 the composition is skewed to basic residues; the sequence is KNVKKKPLKKKKKDS. The segment covering 26 to 43 has biased composition (basic and acidic residues); that stretch reads KKLAEKVQEHSSRDKSPL.

This is an uncharacterized protein from Schizosaccharomyces pombe (strain 972 / ATCC 24843) (Fission yeast).